We begin with the raw amino-acid sequence, 255 residues long: tRNA (guanine-N(1)-)-methyltransferase (255 aa).

Residues G113 and 133 to 138 contribute to the S-adenosyl-L-methionine site; that span reads IGDYVL.

The protein belongs to the RNA methyltransferase TrmD family. Homodimer.

It localises to the cytoplasm. It catalyses the reaction guanosine(37) in tRNA + S-adenosyl-L-methionine = N(1)-methylguanosine(37) in tRNA + S-adenosyl-L-homocysteine + H(+). Its function is as follows. Specifically methylates guanosine-37 in various tRNAs. The polypeptide is tRNA (guanine-N(1)-)-methyltransferase (Salmonella paratyphi A (strain ATCC 9150 / SARB42)).